Consider the following 106-residue polypeptide: Large ribosomal subunit protein uL24 (106 aa).

Residues 84-97 are compositionally biased toward basic and acidic residues; the sequence is EKIGRELGAKEKAR. The interval 84–106 is disordered; it reads EKIGRELGAKEKARLQKRKTAAK.

This sequence belongs to the universal ribosomal protein uL24 family. As to quaternary structure, part of the 50S ribosomal subunit.

Functionally, one of two assembly initiator proteins, it binds directly to the 5'-end of the 23S rRNA, where it nucleates assembly of the 50S subunit. One of the proteins that surrounds the polypeptide exit tunnel on the outside of the subunit. The polypeptide is Large ribosomal subunit protein uL24 (Anaeromyxobacter dehalogenans (strain 2CP-1 / ATCC BAA-258)).